We begin with the raw amino-acid sequence, 512 residues long: Methionine--tRNA ligase (512 aa).

Positions 12–22 match the 'HIGH' region motif; that stretch reads YYVNDVPHIGH. A 'KMSKS' region motif is present at residues 295-299; it reads KISKS. K298 is an ATP binding site.

The protein belongs to the class-I aminoacyl-tRNA synthetase family. MetG type 2B subfamily. In terms of assembly, monomer.

The protein resides in the cytoplasm. It carries out the reaction tRNA(Met) + L-methionine + ATP = L-methionyl-tRNA(Met) + AMP + diphosphate. Functionally, is required not only for elongation of protein synthesis but also for the initiation of all mRNA translation through initiator tRNA(fMet) aminoacylation. In Rickettsia felis (strain ATCC VR-1525 / URRWXCal2) (Rickettsia azadi), this protein is Methionine--tRNA ligase.